A 458-amino-acid chain; its full sequence is Secretion-regulating guanine nucleotide exchange factor (458 aa).

RCC1 repeat units lie at residues 15–67, 68–119, 120–171, 172–230, 231–283, 284–351, and 352–402; these read AALF…VTDG, GDLF…LTEN, GQVL…ATAS, GIVF…LTDA, GEVY…QTET, GKMF…IIGG, and VCYS…LCQL. The tract at residues 420–458 is disordered; that stretch reads DAIEDTESQKAMDKERNWKERQSETSTQSQSDWSRNGGL. The segment covering 426–442 has biased composition (basic and acidic residues); it reads ESQKAMDKERNWKERQS. Ser-427 is modified (phosphoserine).

Interacts with SEC5. The interaction occurs only in the presence of magnesium or manganese and is stimulated by dCTP or GTP.

Its subcellular location is the cytoplasm. The protein localises to the nucleus. Its function is as follows. Probable guanine nucleotide exchange factor (GEF), which may be involved in the secretion process. The protein is Secretion-regulating guanine nucleotide exchange factor (SERGEF) of Homo sapiens (Human).